We begin with the raw amino-acid sequence, 319 residues long: Acetyl esterase (319 aa).

Residues 91 to 93 (HGG) carry the Involved in the stabilization of the negatively charged intermediate by the formation of the oxyanion hole motif. Catalysis depends on residues Ser-165, Asp-262, and His-292.

The protein belongs to the 'GDXG' lipolytic enzyme family. Homodimer. Interacts with MalT and MelA.

The protein localises to the cytoplasm. In terms of biological role, displays esterase activity towards short chain fatty esters (acyl chain length of up to 8 carbons). Able to hydrolyze triacetylglycerol (triacetin) and tributyrylglycerol (tributyrin), but not trioleylglycerol (triolein) or cholesterol oleate. Negatively regulates MalT activity by antagonizing maltotriose binding. Inhibits MelA galactosidase activity. The polypeptide is Acetyl esterase (Escherichia coli O17:K52:H18 (strain UMN026 / ExPEC)).